The following is a 69-amino-acid chain: Small ribosomal subunit protein uS14 (69 aa).

4 residues coordinate Zn(2+): C33, C36, C51, and C54.

This sequence belongs to the universal ribosomal protein uS14 family. Zinc-binding uS14 subfamily. As to quaternary structure, part of the 30S ribosomal subunit. Zn(2+) serves as cofactor.

Functionally, binds 16S rRNA, required for the assembly of 30S particles. The chain is Small ribosomal subunit protein uS14 from Nanoarchaeum equitans (strain Kin4-M).